The following is a 273-amino-acid chain: Undecaprenyl-diphosphatase (273 aa).

Helical transmembrane passes span 6 to 26 (SLLI…LPVS), 45 to 65 (AKTF…VMFW), 90 to 110 (LTLI…LLFH), 116 to 136 (LFNP…LIAA), 190 to 210 (YAAS…ATAL), 222 to 242 (GDIP…LIAI), and 252 to 272 (ISFI…YVVF).

It belongs to the UppP family.

The protein resides in the cell inner membrane. The catalysed reaction is di-trans,octa-cis-undecaprenyl diphosphate + H2O = di-trans,octa-cis-undecaprenyl phosphate + phosphate + H(+). Catalyzes the dephosphorylation of undecaprenyl diphosphate (UPP). Confers resistance to bacitracin. The sequence is that of Undecaprenyl-diphosphatase from Escherichia coli O139:H28 (strain E24377A / ETEC).